The chain runs to 240 residues: tRNA1(Val) (adenine(37)-N6)-methyltransferase (240 aa).

It belongs to the methyltransferase superfamily. tRNA (adenine-N(6)-)-methyltransferase family.

It localises to the cytoplasm. The enzyme catalyses adenosine(37) in tRNA1(Val) + S-adenosyl-L-methionine = N(6)-methyladenosine(37) in tRNA1(Val) + S-adenosyl-L-homocysteine + H(+). Specifically methylates the adenine in position 37 of tRNA(1)(Val) (anticodon cmo5UAC). This chain is tRNA1(Val) (adenine(37)-N6)-methyltransferase, found in Photobacterium profundum (strain SS9).